We begin with the raw amino-acid sequence, 311 residues long: Meiotically up-regulated gene 146 protein (311 aa).

It localises to the cytoplasm. It is found in the nucleus. Its function is as follows. Has a role in sporulation. This is Meiotically up-regulated gene 146 protein (mug146) from Schizosaccharomyces pombe (strain 972 / ATCC 24843) (Fission yeast).